Here is a 185-residue protein sequence, read N- to C-terminus: Ribosome-recycling factor (185 aa).

Belongs to the RRF family.

It localises to the cytoplasm. Responsible for the release of ribosomes from messenger RNA at the termination of protein biosynthesis. May increase the efficiency of translation by recycling ribosomes from one round of translation to another. This is Ribosome-recycling factor from Listeria welshimeri serovar 6b (strain ATCC 35897 / DSM 20650 / CCUG 15529 / CIP 8149 / NCTC 11857 / SLCC 5334 / V8).